Reading from the N-terminus, the 208-residue chain is LexA repressor (208 aa).

The H-T-H motif DNA-binding region spans 28–48; the sequence is RAEIARELGFRSANAAEEHLK. Active-site for autocatalytic cleavage activity residues include S125 and K162.

Belongs to the peptidase S24 family. Homodimer.

The catalysed reaction is Hydrolysis of Ala-|-Gly bond in repressor LexA.. Functionally, represses a number of genes involved in the response to DNA damage (SOS response), including recA and lexA. In the presence of single-stranded DNA, RecA interacts with LexA causing an autocatalytic cleavage which disrupts the DNA-binding part of LexA, leading to derepression of the SOS regulon and eventually DNA repair. The sequence is that of LexA repressor from Aliivibrio fischeri (strain ATCC 700601 / ES114) (Vibrio fischeri).